A 592-amino-acid polypeptide reads, in one-letter code: Dictomallein-1 (592 aa).

A signal peptide spans 1-19; it reads MKILIILLVFLNLITNINC. The region spanning 140 to 402 is the Peptidase M66 domain; the sequence is PNIGHETNLN…QNYFKDSIIY (263 aa). Histidine 294 serves as a coordination point for Zn(2+). Glutamate 295 is a catalytic residue. Histidine 298 and histidine 304 together coordinate Zn(2+).

Belongs to the dictomallein family. Zn(2+) serves as cofactor.

The protein resides in the secreted. The sequence is that of Dictomallein-1 (dtmlA) from Dictyostelium discoideum (Social amoeba).